The chain runs to 89 residues: Small ribosomal subunit protein uS15 (89 aa).

It belongs to the universal ribosomal protein uS15 family. As to quaternary structure, part of the 30S ribosomal subunit. Forms a bridge to the 50S subunit in the 70S ribosome, contacting the 23S rRNA.

In terms of biological role, one of the primary rRNA binding proteins, it binds directly to 16S rRNA where it helps nucleate assembly of the platform of the 30S subunit by binding and bridging several RNA helices of the 16S rRNA. Its function is as follows. Forms an intersubunit bridge (bridge B4) with the 23S rRNA of the 50S subunit in the ribosome. The sequence is that of Small ribosomal subunit protein uS15 from Neisseria gonorrhoeae (strain ATCC 700825 / FA 1090).